A 453-amino-acid polypeptide reads, in one-letter code: Zinc finger and BTB domain-containing protein 44 (453 aa).

A Glycyl lysine isopeptide (Lys-Gly) (interchain with G-Cter in SUMO2) cross-link involves residue Lys-4. Residues 31–98 form the BTB domain; it reads CDITIRVQDR…AYTATLSINT (68 aa). Phosphoserine is present on residues Ser-135, Ser-159, Ser-161, Ser-165, Ser-191, Ser-194, and Ser-199. Thr-200 is subject to Phosphothreonine. The tract at residues 241–265 is disordered; the sequence is QPEKAKQAENTRTLELPGPSEAGRR. Lys-290 participates in a covalent cross-link: Glycyl lysine isopeptide (Lys-Gly) (interchain with G-Cter in SUMO2). Disordered stretches follow at residues 295 to 324 and 336 to 368; these read SDEE…PGSE and SSSI…EDDR. Residues 304–318 show a composition bias toward low complexity; the sequence is SQPVSASQSSLSDQQ. Over residues 352-361 the composition is skewed to polar residues; the sequence is TLQSTSSTNA. 2 consecutive C2H2-type zinc fingers follow at residues 399-421 and 427-449; these read FQCP…MLIH and FQCD…RLKH.

Its subcellular location is the nucleus. The protein is Zinc finger and BTB domain-containing protein 44 (Zbtb44) of Rattus norvegicus (Rat).